The following is a 273-amino-acid chain: Protein GMH1 (273 aa).

The interval 1–33 (MSYLPTYSNDLPAGPQGQRRRNNGNENDARQGY) is disordered. Serine 2 carries the post-translational modification N-acetylserine. Topologically, residues 2 to 89 (SYLPTYSNDL…QTKNQWARDD (88 aa)) are cytoplasmic. Residues 90 to 110 (PSFFIFQIALISLSSIIWSIY) form a helical membrane-spanning segment. At 111 to 134 (NSGFNNDSDMGALSIIGHFFKSLV) the chain is on the lumenal side. Residues 135–155 (MMVILDFFIFGFIMATIFYLL) form a helical membrane-spanning segment. Topologically, residues 156-175 (LNRSHFKFKSSQNSVVEWAY) are cytoplasmic. The chain crosses the membrane as a helical span at residues 176-196 (CFDVHCNSFLIILLCLYFIQF). Over 197–216 (LLLPIINLQNWISLLIGNSL) the chain is Lumenal. A helical transmembrane segment spans residues 217-237 (YCFAIGHYFILTFYGYNQLPF). Residues 238-242 (LKNLN) are Cytoplasmic-facing. The helical transmembrane segment at 243–263 (FILLPTLGLSIIYLISLFGID) threads the bilayer. The Lumenal segment spans residues 264–273 (LSKKLSFYNY).

Belongs to the unc-50 family. As to quaternary structure, interacts with GEA1 and GEA2.

The protein localises to the golgi apparatus membrane. Its subcellular location is the endoplasmic reticulum membrane. The polypeptide is Protein GMH1 (GMH1) (Saccharomyces cerevisiae (strain ATCC 204508 / S288c) (Baker's yeast)).